We begin with the raw amino-acid sequence, 471 residues long: Ribosomal protein uS12 methylthiotransferase RimO (471 aa).

The region spanning 19 to 134 (PRVGFVSLGC…VMNAVHTHLP (116 aa)) is the MTTase N-terminal domain. [4Fe-4S] cluster-binding residues include cysteine 28, cysteine 64, cysteine 93, cysteine 169, cysteine 173, and cysteine 176. In terms of domain architecture, Radical SAM core spans 155 to 396 (LTPRHYAYLK…MAVAEEVSTA (242 aa)). The 73-residue stretch at 399 to 471 (QKRVGQTMQV…QGHDLVGQPV (73 aa)) folds into the TRAM domain.

It belongs to the methylthiotransferase family. RimO subfamily. [4Fe-4S] cluster serves as cofactor.

The protein resides in the cytoplasm. The catalysed reaction is L-aspartate(89)-[ribosomal protein uS12]-hydrogen + (sulfur carrier)-SH + AH2 + 2 S-adenosyl-L-methionine = 3-methylsulfanyl-L-aspartate(89)-[ribosomal protein uS12]-hydrogen + (sulfur carrier)-H + 5'-deoxyadenosine + L-methionine + A + S-adenosyl-L-homocysteine + 2 H(+). Its function is as follows. Catalyzes the methylthiolation of an aspartic acid residue of ribosomal protein uS12. The sequence is that of Ribosomal protein uS12 methylthiotransferase RimO from Delftia acidovorans (strain DSM 14801 / SPH-1).